The primary structure comprises 365 residues: Chorismate synthase (365 aa).

Residues R48 and R54 each coordinate NADP(+). Residues 131 to 133 (RSS), 243 to 244 (NA), G288, 303 to 307 (KPTSS), and R329 contribute to the FMN site.

This sequence belongs to the chorismate synthase family. As to quaternary structure, homotetramer. FMNH2 is required as a cofactor.

The enzyme catalyses 5-O-(1-carboxyvinyl)-3-phosphoshikimate = chorismate + phosphate. The protein operates within metabolic intermediate biosynthesis; chorismate biosynthesis; chorismate from D-erythrose 4-phosphate and phosphoenolpyruvate: step 7/7. Functionally, catalyzes the anti-1,4-elimination of the C-3 phosphate and the C-6 proR hydrogen from 5-enolpyruvylshikimate-3-phosphate (EPSP) to yield chorismate, which is the branch point compound that serves as the starting substrate for the three terminal pathways of aromatic amino acid biosynthesis. This reaction introduces a second double bond into the aromatic ring system. This chain is Chorismate synthase, found in Rhizobium leguminosarum bv. trifolii (strain WSM2304).